The sequence spans 526 residues: Cytochrome P450 monooxygenase SAT11 (526 aa).

Residues 18-38 (AFLLIAMLYLGYLLCICFYNI) traverse the membrane as a helical segment. Residues Asn125 and Asn447 are each glycosylated (N-linked (GlcNAc...) asparagine). Residue Cys455 coordinates heme. A glycan (N-linked (GlcNAc...) asparagine) is linked at Asn520.

This sequence belongs to the cytochrome P450 family. Requires heme as cofactor.

The protein localises to the membrane. Its pathway is mycotoxin biosynthesis. Functionally, cytochrome P450 monooxygenase; part of the satratoxin SC2 cluster involved in the biosynthesis of satratoxins, trichothecene mycotoxins that are associated with human food poisonings. Satratoxins are suggested to be made by products of multiple gene clusters (SC1, SC2 and SC3) that encode 21 proteins in all, including polyketide synthases, acetyltransferases, and other enzymes expected to modify the trichothecene skeleton. SC1 encodes 10 proteins, SAT1 to SAT10. The largest are SAT8, which encodes a putative polyketide synthase (PKS) with a conventional non-reducing architecture, and SAT10, a putative protein containing four ankyrin repeats and thus may be involved in protein scaffolding. The putative short-chain reductase SAT3 may assist the PKS in some capacity. SAT6 contains a secretory lipase domain and acts probably as a trichothecene esterase. SAT5 encodes a putative acetyltransferase, and so, with SAT6, may affect endogenous protection from toxicity. The probable transcription factor SAT9 may regulate the expression of the SC1 cluster. SC2 encodes proteins SAT11 to SAT16, the largest of which encodes the putative reducing PKS SAT13. SAT11 is a cytochrome P450 monooxygenase, while SAT14 and SAT16 are probable acetyltransferases. The SC2 cluster may be regulated by the transcription factor SAT15. SC3 is a small cluster that encodes 5 proteins, SAT17 to SAT21. SAT21 is a putative MFS-type transporter which may have a role in exporting secondary metabolites. The four other proteins putatively encoded in SC3 include the taurine hydroxylase-like protein SAT17, the O-methyltransferase SAT18, the acetyltransferase SAT19, and the Cys6-type zinc finger SAT20, the latter being probably involved in regulation of SC3 expression. In Stachybotrys chartarum (strain CBS 109288 / IBT 7711) (Toxic black mold), this protein is Cytochrome P450 monooxygenase SAT11.